Consider the following 257-residue polypeptide: MYSFTAYANSDIVAFHLLKFLSSENNIEISYADEDTIPEYVSIRDLKAGDKTTIDLYPLVAWKVIAQEDITTGDRVSVGKNGQVKKTTDLRTAFGYAVSLAKAGQLVTVAISTVFDTIITPDDLGNVDDDVKAFLKSNATDANKAKLRDLLVSNLDVKAFLNGSTSEDNKINLRNLLVSNPAILAFLNANPDTDTQTTLRTMIGAGTPYTLPAATTTTLGGVKRIPAFGNSTATDVATLVKDFNNLLAAMRTAGYIL.

It is found in the virion. This is Head fiber protein (8.5) from Bacillus phage Nf (Bacteriophage Nf).